The following is a 1438-amino-acid chain: DNA polymerase III PolC-type (1438 aa).

An Exonuclease domain is found at 422–578 (YVVFDVETTG…YDTEATAYIF (157 aa)).

This sequence belongs to the DNA polymerase type-C family. PolC subfamily.

The protein resides in the cytoplasm. The catalysed reaction is DNA(n) + a 2'-deoxyribonucleoside 5'-triphosphate = DNA(n+1) + diphosphate. Functionally, required for replicative DNA synthesis. This DNA polymerase also exhibits 3' to 5' exonuclease activity. This chain is DNA polymerase III PolC-type, found in Staphylococcus aureus (strain MRSA252).